The sequence spans 94 residues: Protein RESPONSE TO LOW SULFUR 2 (94 aa).

Positions 15–63 (VDELRRKNGEMEKAVEEMKKEMLQLWRRTQVAEEAEERLCSQLAELEAE) form a coiled coil.

Functionally, may be involved in defense responses monitoring. Probably implicated into osmotic stress signaling. In Arabidopsis thaliana (Mouse-ear cress), this protein is Protein RESPONSE TO LOW SULFUR 2.